The chain runs to 89 residues: Small ribosomal subunit protein uS14A (89 aa).

It belongs to the universal ribosomal protein uS14 family. Part of the 30S ribosomal subunit. Contacts proteins S3 and S10.

Its function is as follows. Binds 16S rRNA, required for the assembly of 30S particles and may also be responsible for determining the conformation of the 16S rRNA at the A site. The chain is Small ribosomal subunit protein uS14A from Listeria monocytogenes serovar 1/2a (strain ATCC BAA-679 / EGD-e).